The primary structure comprises 156 residues: Snaclec A14 (156 aa).

Residues 1 to 23 (MGRFIFVRVGLLVVFLSLSGTGA) form the signal peptide. Disulfide bonds link cysteine 27–cysteine 38, cysteine 55–cysteine 152, and cysteine 127–cysteine 144. A C-type lectin domain is found at 34-153 (YDQHCYKAFD…CGDDYPFVCK (120 aa)). Asparagine 141 carries N-linked (GlcNAc...) asparagine glycosylation.

It belongs to the snaclec family. As to quaternary structure, heterodimer; disulfide-linked. In terms of tissue distribution, expressed by the venom gland.

It localises to the secreted. Functionally, interferes with one step of hemostasis (modulation of platelet aggregation, or coagulation cascade, for example). The polypeptide is Snaclec A14 (Macrovipera lebetinus (Levantine viper)).